The following is a 78-amino-acid chain: Acyl carrier protein (78 aa).

The Carrier domain occupies 1–76 (MALFEDIQAV…DVVKYIEDNK (76 aa)). Residue serine 36 is modified to O-(pantetheine 4'-phosphoryl)serine.

Belongs to the acyl carrier protein (ACP) family. Post-translationally, 4'-phosphopantetheine is transferred from CoA to a specific serine of apo-ACP by AcpS. This modification is essential for activity because fatty acids are bound in thioester linkage to the sulfhydryl of the prosthetic group.

Its subcellular location is the cytoplasm. The protein operates within lipid metabolism; fatty acid biosynthesis. Functionally, carrier of the growing fatty acid chain in fatty acid biosynthesis. This is Acyl carrier protein from Helicobacter pylori (strain J99 / ATCC 700824) (Campylobacter pylori J99).